The primary structure comprises 115 residues: Cobalt-zinc-cadmium resistance protein CzcI (115 aa).

Residues 1–20 form the signal peptide; it reads MRRFVLIFVLLILPFQFSWA. Residues 93–102 show a composition bias toward polar residues; that stretch reads QHSSEFSSLN. The disordered stretch occupies residues 93-115; sequence QHSSEFSSLNARAPDRPQWQRLA.

Its subcellular location is the periplasm. In terms of biological role, component of the czc cation-efflux system that confers resistance to cobalt, zinc and cadmium. May have a regulatory function. This Cupriavidus metallidurans (strain ATCC 43123 / DSM 2839 / NBRC 102507 / CH34) (Ralstonia metallidurans) protein is Cobalt-zinc-cadmium resistance protein CzcI (czcI).